Reading from the N-terminus, the 328-residue chain is Formimidoylglutamase (328 aa).

Mn(2+) contacts are provided by H133, D159, H161, D163, D253, and D255.

This sequence belongs to the arginase family. Mn(2+) serves as cofactor.

It catalyses the reaction N-formimidoyl-L-glutamate + H2O = formamide + L-glutamate. It participates in amino-acid degradation; L-histidine degradation into L-glutamate; L-glutamate from N-formimidoyl-L-glutamate (hydrolase route): step 1/1. Its function is as follows. Catalyzes the conversion of N-formimidoyl-L-glutamate to L-glutamate and formamide. This Streptococcus pyogenes serotype M3 (strain ATCC BAA-595 / MGAS315) protein is Formimidoylglutamase.